The chain runs to 380 residues: Gap junction gamma-1 protein (380 aa).

At 1–22 (MSWSFLTRLLDEISNHSTFVGK) the chain is on the cytoplasmic side. A helical transmembrane segment spans residues 23–45 (IWLTLFIIFRIVLTVVGGESIYY). The Extracellular portion of the chain corresponds to 46-75 (DEQSKFVCNTQQPGCENVCYDAFAPLSHVR). A helical membrane pass occupies residues 76–95 (FWVFQIILITTPTIMYLGFA). Over 96-171 (MHKIARSNDV…RRIKRDGLMK (76 aa)) the chain is Cytoplasmic. Residues 172 to 194 (VYILQLLSRIIFEVGFLFGQYIL) form a helical membrane-spanning segment. Over 195–228 (YGFEVAPSYVCTRSPCPHTVDCFVSRPTEKTIFL) the chain is Extracellular. The helical transmembrane segment at 229–251 (LIMYAVSCLCLSLTVLEILHLGL) threads the bilayer. The Cytoplasmic segment spans residues 252-380 (SGIRDAFRRR…GSKCEKGIHA (129 aa)). The interval 337-380 (AYQNGESSPSRSSSPESNGTAVEQNRLNFAQEKQGSKCEKGIHA) is disordered. Over residues 342-353 (ESSPSRSSSPES) the composition is skewed to low complexity. Residues 354 to 369 (NGTAVEQNRLNFAQEK) show a composition bias toward polar residues. Basic and acidic residues predominate over residues 370–380 (QGSKCEKGIHA).

This sequence belongs to the connexin family. Gamma-type subfamily. As to quaternary structure, a connexon is composed of a hexamer of connexins.

It is found in the cell membrane. The protein localises to the cell junction. It localises to the gap junction. Its function is as follows. One gap junction consists of a cluster of closely packed pairs of transmembrane channels, the connexons, through which materials of low MW diffuse from one cell to a neighboring cell. Participates in a developmental pathway for formation of the notochord and tail. This chain is Gap junction gamma-1 protein (gjc1), found in Danio rerio (Zebrafish).